Consider the following 341-residue polypeptide: tRNA N6-adenosine threonylcarbamoyltransferase (341 aa).

Fe cation is bound by residues histidine 111 and histidine 115. Residues 134–138 (LVSGG), aspartate 167, glycine 180, and asparagine 276 each bind substrate. Aspartate 304 is a binding site for Fe cation.

The protein belongs to the KAE1 / TsaD family. The cofactor is Fe(2+).

Its subcellular location is the cytoplasm. It carries out the reaction L-threonylcarbamoyladenylate + adenosine(37) in tRNA = N(6)-L-threonylcarbamoyladenosine(37) in tRNA + AMP + H(+). In terms of biological role, required for the formation of a threonylcarbamoyl group on adenosine at position 37 (t(6)A37) in tRNAs that read codons beginning with adenine. Is involved in the transfer of the threonylcarbamoyl moiety of threonylcarbamoyl-AMP (TC-AMP) to the N6 group of A37, together with TsaE and TsaB. TsaD likely plays a direct catalytic role in this reaction. This chain is tRNA N6-adenosine threonylcarbamoyltransferase, found in Pseudomonas fluorescens (strain Pf0-1).